A 502-amino-acid polypeptide reads, in one-letter code: RNA polymerase sigma factor sigA (502 aa).

Residues 1–23 constitute a chloroplast transit peptide; it reads MATAAVIGLNTGKRLLSSSFYHS. The span at 57-71 shows a compositional bias: polar residues; sequence YSPSFPSSNRHTQSA. The tract at residues 57-92 is disordered; sequence YSPSFPSSNRHTQSAKALKESVDVASTEKPWLPNGT. Thr-170 carries the post-translational modification Phosphothreonine. A Polymerase core binding motif is present at residues 287–300; it reads DLVQGGLIGLLRGI. Residues 461-480 constitute a DNA-binding region (H-T-H motif); that stretch reads WEDISKRIGLSRERVRQVGL.

It belongs to the sigma-70 factor family. As to quaternary structure, interacts with SIB1 in chloroplast. Binds to CSK. In terms of processing, the phosphorylation of Thr-170 mediated by oxidative conditions of plastoquinone (PQ) changes the promoter specificity, selectively inhibiting the transcription of the psaA gene, which encodes a PS-I protein. Phosphorylation of the holoenzyme occurs in the dark. This phosphorylation in response to plastoquinone redox state modification is mediated by CSK. Highly expressed in leaves, and to a lesser extent in roots. Expressed in old seedlings (8 days), cotyledons, hypocotyls, leaves, sepals and siliques.

The protein localises to the plastid. It localises to the chloroplast. Essential protein. Sigma factors are initiation factors that promote the attachment of plastid-encoded RNA polymerase (PEP) to specific initiation sites and are then released. Controls the transcription of the psaA gene and thus modulates photosystem stoichiometry. Thereby maintains a harmonious electron flow and photosynthetic efficiency. In Arabidopsis thaliana (Mouse-ear cress), this protein is RNA polymerase sigma factor sigA (SIGA).